The sequence spans 224 residues: Small ribosomal subunit protein uS3 (224 aa).

A KH type-2 domain is found at 38 to 106 (IRKFISKKLK…QVHINIVEIK (69 aa)).

This sequence belongs to the universal ribosomal protein uS3 family. In terms of assembly, part of the 30S ribosomal subunit. Forms a tight complex with proteins S10 and S14.

Functionally, binds the lower part of the 30S subunit head. Binds mRNA in the 70S ribosome, positioning it for translation. The sequence is that of Small ribosomal subunit protein uS3 from Lactobacillus helveticus (strain DPC 4571).